Consider the following 299-residue polypeptide: ATP phosphoribosyltransferase (299 aa).

It belongs to the ATP phosphoribosyltransferase family. Long subfamily. It depends on Mg(2+) as a cofactor.

It localises to the cytoplasm. The enzyme catalyses 1-(5-phospho-beta-D-ribosyl)-ATP + diphosphate = 5-phospho-alpha-D-ribose 1-diphosphate + ATP. It functions in the pathway amino-acid biosynthesis; L-histidine biosynthesis; L-histidine from 5-phospho-alpha-D-ribose 1-diphosphate: step 1/9. Its activity is regulated as follows. Feedback inhibited by histidine. Catalyzes the condensation of ATP and 5-phosphoribose 1-diphosphate to form N'-(5'-phosphoribosyl)-ATP (PR-ATP). Has a crucial role in the pathway because the rate of histidine biosynthesis seems to be controlled primarily by regulation of HisG enzymatic activity. The sequence is that of ATP phosphoribosyltransferase from Shewanella sediminis (strain HAW-EB3).